Reading from the N-terminus, the 111-residue chain is Antitoxin PrlF (111 aa).

The SpoVT-AbrB domain occupies 12–59; it reads TTESKVTIRGQTTIPAPVREALKLKPGLDSIHYEILPGGQVFMCRLGD.

Homodimer; forms a complex with YhaV with stoichiometry PrlF(2)-YhaV(4), possibly as a YhaV(2)-PrlF(2)-YhaV(2) complex like the MazFE complex.

Its subcellular location is the cytoplasm. Antitoxin component of a type II toxin-antitoxin (TA) system. Labile antitoxin that binds to the YhaV toxin and neutralizes its ribonuclease activity. Also acts as a transcription factor. The YhaV/PrlF complex binds the prlF-yhaV operon, probably negatively regulating its expression. In Escherichia coli O6:H1 (strain CFT073 / ATCC 700928 / UPEC), this protein is Antitoxin PrlF (prlF).